Consider the following 218-residue polypeptide: Ras-related protein Rab-27B (218 aa).

T2 carries the post-translational modification N-acetylthreonine. 16–24 (GDSGVGKTT) lines the GTP pocket. The Effector region motif lies at 38–46 (FITTVGIDF). GTP is bound by residues 74–78 (DTAGQ), 133–136 (NKAD), and 163–165 (SAA). C123 and C188 form a disulfide bridge. The tract at residues 194-218 (IPDTVNGGNSGNLDGEKPPEKKCIC) is disordered. Residues 207 to 218 (DGEKPPEKKCIC) show a composition bias toward basic and acidic residues. Residues C216 and C218 are each lipidated (S-geranylgeranyl cysteine). C218 is modified (cysteine methyl ester).

It belongs to the small GTPase superfamily. Rab family. In terms of assembly, interacts with SYTL2, SYTL4, MYRIP and MLPH. Interacts with RPH3A and RPH3A. Interacts (GDP-bound form preferentially) with DENND10. Expressed primarily in testis.

It is found in the membrane. The protein resides in the late endosome. It catalyses the reaction GTP + H2O = GDP + phosphate + H(+). With respect to regulation, regulated by guanine nucleotide exchange factors (GEFs) which promote the exchange of bound GDP for free GTP, GTPase activating proteins (GAPs) which increase the GTP hydrolysis activity, and GDP dissociation inhibitors which inhibit the dissociation of the nucleotide from the GTPase. Activated by GEFs such as DENND10. In terms of biological role, small GTPase which cycles between active GTP-bound and inactive GDP-bound states. In its active state, binds to a variety of effector proteins to regulate homeostasis of late endocytic pathway, including endosomal positioning, maturation and secretion. Plays a role in NTRK2/TRKB axonal anterograde transport by facilitating the association of NTRK2/TRKB with KLC1. May be involved in targeting uroplakins to urothelial apical membranes. This chain is Ras-related protein Rab-27B (RAB27B), found in Homo sapiens (Human).